A 230-amino-acid chain; its full sequence is Large ribosomal subunit protein uL1 (230 aa).

Belongs to the universal ribosomal protein uL1 family. As to quaternary structure, part of the 50S ribosomal subunit.

Functionally, binds directly to 23S rRNA. The L1 stalk is quite mobile in the ribosome, and is involved in E site tRNA release. In terms of biological role, protein L1 is also a translational repressor protein, it controls the translation of the L11 operon by binding to its mRNA. In Erythrobacter litoralis (strain HTCC2594), this protein is Large ribosomal subunit protein uL1.